The sequence spans 206 residues: Small ribosomal subunit protein uS4 (206 aa).

An S4 RNA-binding domain is found at 96–158 (GRLDNVVYRM…AKQQSRIKAA (63 aa)).

The protein belongs to the universal ribosomal protein uS4 family. In terms of assembly, part of the 30S ribosomal subunit. Contacts protein S5. The interaction surface between S4 and S5 is involved in control of translational fidelity.

Its function is as follows. One of the primary rRNA binding proteins, it binds directly to 16S rRNA where it nucleates assembly of the body of the 30S subunit. In terms of biological role, with S5 and S12 plays an important role in translational accuracy. The polypeptide is Small ribosomal subunit protein uS4 (Aliivibrio fischeri (strain ATCC 700601 / ES114) (Vibrio fischeri)).